An 86-amino-acid polypeptide reads, in one-letter code: Putative membrane protein insertion efficiency factor (86 aa).

The protein belongs to the UPF0161 family.

The protein resides in the cell inner membrane. In terms of biological role, could be involved in insertion of integral membrane proteins into the membrane. The chain is Putative membrane protein insertion efficiency factor from Cellvibrio japonicus (strain Ueda107) (Pseudomonas fluorescens subsp. cellulosa).